Here is a 348-residue protein sequence, read N- to C-terminus: Dihydroorotase (348 aa).

2 residues coordinate Zn(2+): His-17 and His-19. Substrate contacts are provided by residues 19-21 (HLR) and Asn-45. The Zn(2+) site is built by Lys-103, His-140, and His-178. Lys-103 carries the post-translational modification N6-carboxylysine. His-140 lines the substrate pocket. Leu-223 is a substrate binding site. Asp-251 contributes to the Zn(2+) binding site. Residue Asp-251 is part of the active site. Residues His-255 and Ala-267 each contribute to the substrate site.

The protein belongs to the metallo-dependent hydrolases superfamily. DHOase family. Class II DHOase subfamily. As to quaternary structure, homodimer. It depends on Zn(2+) as a cofactor.

The catalysed reaction is (S)-dihydroorotate + H2O = N-carbamoyl-L-aspartate + H(+). Its pathway is pyrimidine metabolism; UMP biosynthesis via de novo pathway; (S)-dihydroorotate from bicarbonate: step 3/3. Its function is as follows. Catalyzes the reversible cyclization of carbamoyl aspartate to dihydroorotate. This chain is Dihydroorotase, found in Yersinia pseudotuberculosis serotype I (strain IP32953).